Reading from the N-terminus, the 378-residue chain is MDSIGDNVTEMDAFVRDLTMKPYAELEKRKAELHAQKLKLVQKRQQLLRDNYNVLVDYARNQDAFYQLLENSRHDFKELVLHTNQLYEPVKRSQNFLTSISEHYRDAKLMHQVQPQLSSILELPELMNACIERNYFSETLEFQALAYRLKDRFGTNSIIQELITQVETLVVKLTEKLILQLQKPLKLYSLIKVVTYLRVTAKLSEAQLKYVFLYFSWKQLQTSLRNLVPLLDYNNPELYLRRYIQVIRDRAFSLLFQYQSVFGESSNDRLNAAGTVDIPNSTSTSASPFEMDPEGFNNFGQNILSSFVRKLQLEICYVLQKFMPNVKDSTSKFSLLLQLYYCNQSLTKVGTDISIPLSKILGSEWLEMIHSQSSEKQA.

It belongs to the COG8 family. As to quaternary structure, component of the conserved oligomeric Golgi complex which is composed of eight different subunits and is required for normal Golgi morphology and localization.

The protein localises to the golgi apparatus membrane. Required for normal Golgi function. This is Conserved oligomeric Golgi complex subunit 8 (cog8) from Schizosaccharomyces pombe (strain 972 / ATCC 24843) (Fission yeast).